We begin with the raw amino-acid sequence, 686 residues long: Cadmium, zinc and cobalt-transporting ATPase (686 aa).

The HMA domain maps to 1-62 (MQEYHIHNLD…FIKQNEPHLS (62 aa)). At 1-72 (MQEYHIHNLD…LSFKEATEKP (72 aa)) the chain is on the cytoplasmic side. The Cd(2+) site is built by cysteine 11 and cysteine 14. Co(2+) is bound by residues cysteine 11 and cysteine 14. Residues cysteine 11 and cysteine 14 each contribute to the Zn(2+) site. Residues 73–92 (LSFTPLIITIMVFLGAILIL) traverse the membrane as a helical segment. Over 93–102 (HLNPSPLIEK) the chain is Extracellular. Residues 103 to 124 (AMFFVLALVYLVSGKDVILGAF) form a helical membrane-spanning segment. Over 125–131 (RGLRKGQ) the chain is Cytoplasmic. The chain crosses the membrane as a helical span at residues 132–151 (FFDENALMLIATIAAFFVGA). Residues 152–154 (YEE) are Extracellular-facing. The helical transmembrane segment at 155–174 (SVSIMVFYSAGEFLQKLAVS) threads the bilayer. At 175–308 (RSKKSLKALV…ITKFSRYYTP (134 aa)) the chain is on the cytoplasmic side. Residues 309–327 (SVLFIALMIAVLPPLFSMG) traverse the membrane as a helical segment. The Extracellular segment spans residues 328 to 332 (SFDEW). A helical membrane pass occupies residues 333 to 350 (IYRGLVALMVSCPCALVI). Residues 351-635 (SVPLGYFGGV…VLAIAKKTKS (285 aa)) are Cytoplasmic-facing. Catalysis depends on aspartate 388, which acts as the 4-aspartylphosphate intermediate. Mg(2+) contacts are provided by aspartate 583 and aspartate 587. A helical transmembrane segment spans residues 636–657 (IIWQNILFALGIKAVFIVLGLM). Topologically, residues 658 to 665 (GVASLWEA) are extracellular. The helical transmembrane segment at 666–681 (VFGDVGVTLLALANSM) threads the bilayer. The Cytoplasmic segment spans residues 682–686 (RAMRA).

This sequence belongs to the cation transport ATPase (P-type) (TC 3.A.3) family. Type IB subfamily.

It is found in the cell membrane. It catalyses the reaction Zn(2+)(in) + ATP + H2O = Zn(2+)(out) + ADP + phosphate + H(+). The catalysed reaction is Cd(2+)(in) + ATP + H2O = Cd(2+)(out) + ADP + phosphate + H(+). Functionally, couples the hydrolysis of ATP with the transport of cadmium, zinc and cobalt out of the cell. This ion efflux may influence the activity of urease, which is essential for the survival of the bacterium in the gastric environment. In Helicobacter pylori (strain ATCC 700392 / 26695) (Campylobacter pylori), this protein is Cadmium, zinc and cobalt-transporting ATPase (cadA).